Reading from the N-terminus, the 213-residue chain is Sclerostin (213 aa).

A signal peptide spans 1–23; it reads MQLPLALCLVCLLVHAAFRVVEG. The interval 41 to 71 is disordered; that stretch reads GEYPEPPPELENNKTMNRAENGGRPPHHPFE. Residue Asn-53 is glycosylated (N-linked (GlcNAc...) asparagine). Disulfide bonds link Cys-80-Cys-134, Cys-94-Cys-148, Cys-105-Cys-165, and Cys-109-Cys-167. The CTCK domain occupies 82 to 172; that stretch reads ELHFTRYVTD…ASCKCKRLTR (91 aa). Asn-175 carries N-linked (GlcNAc...) asparagine glycosylation. Residues 178–213 form a disordered region; the sequence is ELKDFGPEAARPQKGRKPRPRARGAKANQAELENAY. Positions 190–201 are enriched in basic residues; it reads QKGRKPRPRARG.

The protein belongs to the sclerostin family. Interacts with LRP4 (via the extracellular domain); the interaction facilitates the inhibition of Wnt signaling. Interacts with LRP5 (via the first two YWTD-EGF repeat domains); the interaction inhibits Wnt-mediated signaling. Interacts with LRP6.

It is found in the secreted. Its subcellular location is the extracellular space. The protein localises to the extracellular matrix. Its function is as follows. Negative regulator of bone growth that acts through inhibition of Wnt signaling and bone formation. The protein is Sclerostin of Chlorocebus aethiops (Green monkey).